Here is a 726-residue protein sequence, read N- to C-terminus: 1,4-alpha-glucan branching enzyme GlgB (726 aa).

Asp-407 functions as the Nucleophile in the catalytic mechanism. The Proton donor role is filled by Glu-460.

It belongs to the glycosyl hydrolase 13 family. GlgB subfamily. Monomer.

The catalysed reaction is Transfers a segment of a (1-&gt;4)-alpha-D-glucan chain to a primary hydroxy group in a similar glucan chain.. It participates in glycan biosynthesis; glycogen biosynthesis. Its function is as follows. Catalyzes the formation of the alpha-1,6-glucosidic linkages in glycogen by scission of a 1,4-alpha-linked oligosaccharide from growing alpha-1,4-glucan chains and the subsequent attachment of the oligosaccharide to the alpha-1,6 position. This is 1,4-alpha-glucan branching enzyme GlgB from Hydrogenovibrio crunogenus (strain DSM 25203 / XCL-2) (Thiomicrospira crunogena).